A 336-amino-acid polypeptide reads, in one-letter code: MASPEERLLDELNNVIVSFLCDSGSLEVERCSGAHVFSRGSSQPLCTVKLRHGQIYHLEFVYKFLAFKLKNCNYPSSPVFVISNNGLATTLRCFLHEPSGLRSGQSGPCLGLSTDVDLPKNSIIMLGQDDFIKFKSPLVFPAELDLLKSMVVCRAYITEHRTTMQFLVFQAANAQKASRVMDMISDMSQQLSRSGQVEDTGARVTGGGGPRPGVTHSGCLGDSHVRGRGGWDLDNFSEAETEDEASYAPWRDKDSWSESEAAPWKKELVRHPIRRHRTRETRRMRGSHSRVEHVPPETRETVVGGAWRYSWRATPYLARVLAVTAVALLLMFLRWT.

The Perinuclear space segment spans residues methionine 1–proline 315. Disordered stretches follow at residues arginine 193–glycine 221 and arginine 277–glutamate 297. The span at arginine 277–histidine 288 shows a compositional bias: basic residues. The helical transmembrane segment at tyrosine 316–leucine 333 threads the bilayer. The Nuclear segment spans residues arginine 334–threonine 336.

It belongs to the herpesviridae NEC2 protein family. In terms of assembly, forms a heterodimeric viral nuclear egress complex (NEC) with NEC1. Interacts with host IKBKE; this interaction inhibits host IKBKE kinase activity and IRF3 nuclear translocation. In terms of processing, phosphorylated.

It localises to the host nucleus inner membrane. Its subcellular location is the host cytoplasm. The protein resides in the host perinuclear region. Functionally, plays an essential role in virion nuclear egress, the first step of virion release from infected cell. Within the host nucleus, NEC1 interacts with the newly formed capsid through the vertexes and directs it to the inner nuclear membrane by associating with NEC2. Induces the budding of the capsid at the inner nuclear membrane as well as its envelopment into the perinuclear space. There, the NEC1/NEC2 complex promotes the fusion of the enveloped capsid with the outer nuclear membrane and the subsequent release of the viral capsid into the cytoplasm where it will reach the secondary budding sites in the host Golgi or trans-Golgi network. Inhibits host IKBKE and IRF3, thereby impairing type I IFN signaling. In Homo sapiens (Human), this protein is Nuclear egress protein 2.